A 153-amino-acid polypeptide reads, in one-letter code: 6,7-dimethyl-8-ribityllumazine synthase (153 aa).

5-amino-6-(D-ribitylamino)uracil is bound by residues W22, S56 to E58, and A80 to I82. Residue A85–T86 coordinates (2S)-2-hydroxy-3-oxobutyl phosphate. Residue H88 is the Proton donor of the active site. Residue L113 participates in 5-amino-6-(D-ribitylamino)uracil binding. Position 127 (R127) interacts with (2S)-2-hydroxy-3-oxobutyl phosphate.

It belongs to the DMRL synthase family.

The enzyme catalyses (2S)-2-hydroxy-3-oxobutyl phosphate + 5-amino-6-(D-ribitylamino)uracil = 6,7-dimethyl-8-(1-D-ribityl)lumazine + phosphate + 2 H2O + H(+). It participates in cofactor biosynthesis; riboflavin biosynthesis; riboflavin from 2-hydroxy-3-oxobutyl phosphate and 5-amino-6-(D-ribitylamino)uracil: step 1/2. In terms of biological role, catalyzes the formation of 6,7-dimethyl-8-ribityllumazine by condensation of 5-amino-6-(D-ribitylamino)uracil with 3,4-dihydroxy-2-butanone 4-phosphate. This is the penultimate step in the biosynthesis of riboflavin. This Herpetosiphon aurantiacus (strain ATCC 23779 / DSM 785 / 114-95) protein is 6,7-dimethyl-8-ribityllumazine synthase.